The primary structure comprises 601 residues: Putative Lon protease homolog (601 aa).

In terms of domain architecture, Lon proteolytic spans 363 to 560; that stretch reads GEIVGQINGL…YQACELLFGR (198 aa). Residues Ser455 and Lys498 contribute to the active site.

Belongs to the peptidase S16 family.

The chain is Putative Lon protease homolog from Haemophilus influenzae (strain ATCC 51907 / DSM 11121 / KW20 / Rd).